Consider the following 187-residue polypeptide: Auxin-binding protein T92 (187 aa).

A signal peptide spans 1-20 (MARHIIILVAVFWFATAEAS). A disulfide bond links C22 and C177. Zn(2+) contacts are provided by H78, H80, and E84. An N-linked (GlcNAc...) asparagine glycan is attached at N117. H128 is a binding site for Zn(2+). The Prevents secretion from ER signature appears at 184–187 (KDEL).

Homodimer.

It is found in the endoplasmic reticulum lumen. In terms of biological role, this is probably a receptor for the plant hormone auxin. This is Auxin-binding protein T92 (T92) from Nicotiana tabacum (Common tobacco).